The primary structure comprises 76 residues: MQLVLAAKYIGAAIATIGLTGAGIGIAIVFAALINGTSRNPSLRNTLFPFAILGFALSEATGLFCLMISFLLLYGV.

Position 1 is an N-formylmethionine (M1). 2 helical membrane passes run I14–I34 and I52–L72.

As to quaternary structure, F-type ATP synthases have 2 components, the catalytic core F(1) and the membrane-embedded component F(0), linked together by a central stalk and a peripheral stalk. The central stalk, also called rotor shaft, is often seen as part of F(1). The peripheral stalk is seen as part of F(0). F(0) contains the membrane channel next to the rotor. F-type ATP synthases form dimers but each monomer functions independently in ATP generation. The dimer consists of 18 different polypeptides: ATP1 (subunit alpha, part of F(1), 3 molecules per monomer), ATP2 (subunit beta, part of F(1), 3 molecules per monomer), ATP3 (subunit gamma, part of the central stalk), ATP4 (subunit b, part of the peripheral stalk), ATP5/OSCP (subunit 5/OSCP, part of the peripheral stalk), ATP6 (subunit a, part of the peripheral stalk), ATP7 (subunit d, part of the peripheral stalk), ATP8 (subunit 8, part of the peripheral stalk), OLI1 (subunit c, part of the rotor, 10 molecules per monomer), ATP14 (subunit h, part of the peripheral stalk), ATP15 (subunit epsilon, part of the central stalk), ATP16 (subunit delta, part of the central stalk), ATP17 (subunit f, part of the peripheral stalk), ATP18 (subunit i/j, part of the peripheral stalk). Dimer-specific subunits are ATP19 (subunit k, at interface between monomers), ATP20 (subunit g, at interface between monomers), TIM11 (subunit e, at interface between monomers). Also contains subunit L.

The protein resides in the mitochondrion inner membrane. Functionally, mitochondrial membrane ATP synthase (F(1)F(0) ATP synthase or Complex V) produces ATP from ADP in the presence of a proton gradient across the membrane which is generated by electron transport complexes of the respiratory chain. F-type ATP synthases consist of two structural domains, F(1) - containing the extramembraneous catalytic core, and F(0) - containing the membrane proton channel, linked together by a central stalk and a peripheral stalk. During catalysis, ATP synthesis in the catalytic domain of F(1) is coupled via a rotary mechanism of the central stalk subunits to proton translocation. Part of the complex F(0) domain. A homomeric c-ring of 10 OLI1/ATP9 subunits is part of the complex rotary element. In Pichia angusta (Yeast), this protein is ATP synthase subunit 9, mitochondrial.